The sequence spans 223 residues: Killer cell lectin-like receptor subfamily B member 1B allele C (223 aa).

The Cytoplasmic portion of the chain corresponds to 1-45 (MDTAVVYADLHLARTGEPKRESPPSLSPDTCQCPRWHRLALKLGC). An ITIM motif motif is present at residues 5–10 (VVYADL). The short motif at 31-34 (CQCP) is the LCK-binding motif element. Residues 46 to 66 (ACFILLVLSVIGLGVLVLTLL) traverse the membrane as a helical; Signal-anchor for type II membrane protein segment. Over 67–223 (QKPLLQNSPA…LKRESTCNDS (157 aa)) the chain is Extracellular. The C-type lectin domain occupies 101–211 (HRDKCFHVSQ…CDSDNIWICQ (111 aa)). 2 disulfides stabilise this stretch: Cys-122–Cys-210 and Cys-189–Cys-202.

In terms of assembly, homodimer; disulfide-linked. Interacts with tyrosine kinase LCK. Binds PTPN6/SHP-1 in a phosphorylation-dependent manner. In terms of tissue distribution, expressed in a subset of natural killer cells.

It localises to the membrane. In terms of biological role, receptor for CLEC2D/OCIL. Ligand-binding contributes to inhibition of cytotoxic natural killer (NK) cells. May mediate MHC class I-independent 'missing-self' recognition of allografts, tumor cells and virus-infected cells. This is Killer cell lectin-like receptor subfamily B member 1B allele C from Rattus norvegicus (Rat).